Consider the following 222-residue polypeptide: L-serine dehydratase, beta chain (222 aa).

The 73-residue stretch at 150–222 folds into the ACT domain; sequence TILLEYPEQR…RFTTAKYVEV (73 aa).

It belongs to the iron-sulfur dependent L-serine dehydratase family. In terms of assembly, heterooctamer of four alpha chains and four beta chains. [4Fe-4S] cluster is required as a cofactor.

It catalyses the reaction L-serine = pyruvate + NH4(+). It functions in the pathway carbohydrate biosynthesis; gluconeogenesis. This Peptoniphilus asaccharolyticus (Peptostreptococcus asaccharolyticus) protein is L-serine dehydratase, beta chain (sdhB).